A 243-amino-acid polypeptide reads, in one-letter code: MEWEDEAYVLSARSHGETGAIVELLTEARGKVAAHVAGAASRRMKPFLQPGARVIVRYRAKVEGQLGSATLEPMGEGPSSLFDDRLALAGLSAAAAVAAAALPEREAHPGAFHALEALIRVLEIPEIWPAVYVRYEAGLLQELGFGLDLSKCAATGAFDDLVYVSPRTGRAVSREAGKPYHDKLLPLPPFMLSSQGGLAEGDVKAGLDITGHFLEQFVFGPLNRPLPPARLWLLDRLAEADKL.

It belongs to the RecO family.

In terms of biological role, involved in DNA repair and RecF pathway recombination. The sequence is that of DNA repair protein RecO from Caulobacter vibrioides (strain NA1000 / CB15N) (Caulobacter crescentus).